We begin with the raw amino-acid sequence, 145 residues long: Transcription antitermination protein NusB (145 aa).

Belongs to the NusB family.

Involved in transcription antitermination. Required for transcription of ribosomal RNA (rRNA) genes. Binds specifically to the boxA antiterminator sequence of the ribosomal RNA (rrn) operons. The chain is Transcription antitermination protein NusB from Thiobacillus denitrificans (strain ATCC 25259 / T1).